The sequence spans 76 residues: ATP synthase subunit 9, mitochondrial (76 aa).

2 helical membrane-spanning segments follow: residues 14–34 and 52–72; these read ISTI…AALI and ILGF…SFLL.

The protein belongs to the ATPase C chain family. F-type ATPases have 2 components, CF(1) - the catalytic core - and CF(0) - the membrane proton channel. CF(1) has five subunits: alpha(3), beta(3), gamma(1), delta(1), epsilon(1). CF(0) has three main subunits: a, b and c.

It localises to the mitochondrion membrane. Its function is as follows. Mitochondrial membrane ATP synthase (F(1)F(0) ATP synthase or Complex V) produces ATP from ADP in the presence of a proton gradient across the membrane which is generated by electron transport complexes of the respiratory chain. F-type ATPases consist of two structural domains, F(1) - containing the extramembraneous catalytic core and F(0) - containing the membrane proton channel, linked together by a central stalk and a peripheral stalk. During catalysis, ATP synthesis in the catalytic domain of F(1) is coupled via a rotary mechanism of the central stalk subunits to proton translocation. Part of the complex F(0) domain. A homomeric c-ring of probably 10 subunits is part of the complex rotary element. In Vanderwaltozyma polyspora (strain ATCC 22028 / DSM 70294 / BCRC 21397 / CBS 2163 / NBRC 10782 / NRRL Y-8283 / UCD 57-17) (Kluyveromyces polysporus), this protein is ATP synthase subunit 9, mitochondrial (ATP9).